We begin with the raw amino-acid sequence, 313 residues long: HPr kinase/phosphorylase (313 aa).

Active-site residues include H141 and K162. G156–S163 contributes to the ATP binding site. Residue S163 participates in Mg(2+) binding. D180 functions as the Proton acceptor; for phosphorylation activity. Proton donor; for dephosphorylation activity in the catalytic mechanism. Residues I203–D212 are important for the catalytic mechanism of both phosphorylation and dephosphorylation. E204 serves as a coordination point for Mg(2+). R247 is a catalytic residue. Residues P268 to R273 form an important for the catalytic mechanism of dephosphorylation region.

This sequence belongs to the HPrK/P family. Homohexamer. Mg(2+) is required as a cofactor.

It catalyses the reaction [HPr protein]-L-serine + ATP = [HPr protein]-O-phospho-L-serine + ADP + H(+). It carries out the reaction [HPr protein]-O-phospho-L-serine + phosphate + H(+) = [HPr protein]-L-serine + diphosphate. Functionally, catalyzes the ATP- as well as the pyrophosphate-dependent phosphorylation of a specific serine residue in HPr, a phosphocarrier protein of the phosphoenolpyruvate-dependent sugar phosphotransferase system (PTS). HprK/P also catalyzes the pyrophosphate-producing, inorganic phosphate-dependent dephosphorylation (phosphorolysis) of seryl-phosphorylated HPr (P-Ser-HPr). The two antagonistic activities of HprK/P are regulated by several intracellular metabolites, which change their concentration in response to the absence or presence of rapidly metabolisable carbon sources (glucose, fructose, etc.) in the growth medium. Therefore, by controlling the phosphorylation state of HPr, HPrK/P is a sensor enzyme that plays a major role in the regulation of carbon metabolism and sugar transport: it mediates carbon catabolite repression (CCR), and regulates PTS-catalyzed carbohydrate uptake and inducer exclusion. This Mycoplasma mycoides subsp. mycoides SC (strain CCUG 32753 / NCTC 10114 / PG1) protein is HPr kinase/phosphorylase.